Reading from the N-terminus, the 363-residue chain is Ribosomal RNA large subunit methyltransferase M (363 aa).

Residues serine 194, 227-230, aspartate 246, aspartate 266, and aspartate 284 contribute to the S-adenosyl-L-methionine site; that span reads CPGG. Catalysis depends on lysine 313, which acts as the Proton acceptor.

Belongs to the class I-like SAM-binding methyltransferase superfamily. RNA methyltransferase RlmE family. RlmM subfamily. As to quaternary structure, monomer.

The protein localises to the cytoplasm. It carries out the reaction cytidine(2498) in 23S rRNA + S-adenosyl-L-methionine = 2'-O-methylcytidine(2498) in 23S rRNA + S-adenosyl-L-homocysteine + H(+). In terms of biological role, catalyzes the 2'-O-methylation at nucleotide C2498 in 23S rRNA. This Mannheimia succiniciproducens (strain KCTC 0769BP / MBEL55E) protein is Ribosomal RNA large subunit methyltransferase M.